A 308-amino-acid chain; its full sequence is High-affinity branched-chain amino acid transport system permease protein LivH (308 aa).

Over 1–21 the chain is Cytoplasmic; that stretch reads MSEQFLYFLQQMFNGVTLGST. A helical membrane pass occupies residues 22–42; it reads YALIAIGYTMVYGIIGMINFA. At 43-45 the chain is on the periplasmic side; sequence HGE. Residues 46–66 traverse the membrane as a helical segment; that stretch reads VYMIGSYVSFMIIAALMMMGI. At 67–70 the chain is on the cytoplasmic side; sequence DTSW. Residues 71 to 91 form a helical membrane-spanning segment; the sequence is LLVAAGFIGAIIIASAYGWSI. At 92-104 the chain is on the periplasmic side; it reads ERVAYRPVRNSKR. The helical transmembrane segment at 105-125 threads the bilayer; that stretch reads LIALISAIGMSIFLQNYVSLT. The Cytoplasmic segment spans residues 126-154; the sequence is EGSRDVALPSLFNGQWIVGSSENFSASIT. A helical transmembrane segment spans residues 155-175; it reads TMQAVIWIVTFLAMLALTIFI. The Periplasmic segment spans residues 176 to 203; it reads RYSRMGRACRACAEDLKMASLLGINTDR. Residues 204–224 traverse the membrane as a helical segment; the sequence is VIALTFVIGAAMAAVAGVLLG. Over 225-246 the chain is Cytoplasmic; that stretch reads QFYGVINPYIGFMAGMKAFTAA. A helical membrane pass occupies residues 247-266; sequence VLGGIGSIPGAMIGGLILGV. Residues 267 to 280 lie on the Periplasmic side of the membrane; sequence AEALSSAYLSTEYK. Residues 281 to 301 form a helical membrane-spanning segment; sequence DVVSFALLILVLLVMPTGILG. Residues 302 to 308 are Cytoplasmic-facing; sequence RPEVEKV.

Belongs to the binding-protein-dependent transport system permease family. LivHM subfamily.

It localises to the cell inner membrane. Its function is as follows. Part of the binding-protein-dependent transport system for branched-chain amino acids. Probably responsible for the translocation of the substrates across the membrane. The polypeptide is High-affinity branched-chain amino acid transport system permease protein LivH (livH) (Salmonella typhimurium (strain LT2 / SGSC1412 / ATCC 700720)).